A 234-amino-acid chain; its full sequence is Protein-toxin resistance protein KTD1 (234 aa).

Residues 1–47 lie on the Cytoplasmic side of the membrane; that stretch reads MQTPSENTDVKMDTLDEPSAHLIEENVALPEDTFSSHLSYVLYEIAH. Residues 48–68 form a helical membrane-spanning segment; the sequence is CKPIMFMIIIIVSLISLIVLF. The segment at 68-75 is required for resistance to killer toxin K28, a protein-toxin encoded by the M28 virus; that stretch reads FHDNDGCT. Residues 69–76 lie on the Extracellular side of the membrane; the sequence is HDNDGCTV. A helical membrane pass occupies residues 77–97; sequence ILVMSLIVASMALMVVAAFTF. At 98-234 the chain is on the cytoplasmic side; it reads GKAITEQEFM…RKQYPDADLP (137 aa). The interval 147-234 is required for resistance to killer toxin K28, a protein-toxin encoded by the M28 virus; sequence FYSGKKCHEF…RKQYPDADLP (88 aa). Residues 168 to 187 form a disordered region; sequence SHSDSSSNSAEDTQSPVSAG. Polar residues predominate over residues 177–187; sequence AEDTQSPVSAG. Residue Lys-217 forms a Glycyl lysine isopeptide (Lys-Gly) (interchain with G-Cter in ubiquitin) linkage.

The protein belongs to the DUP/COS family.

The protein resides in the vacuole membrane. It localises to the golgi apparatus. Its subcellular location is the trans-Golgi network membrane. It is found in the endosome membrane. Confers resistance to killer toxin K28, a protein-toxin encoded by the M28 virus that uses S.cerevisiae as a host. Probably acts against K28 after endocytosis of the protein-toxin. This is Protein-toxin resistance protein KTD1 from Saccharomyces cerevisiae (strain ATCC 204508 / S288c) (Baker's yeast).